The following is a 126-amino-acid chain: Aspartate 1-decarboxylase (126 aa).

Ser-25 (schiff-base intermediate with substrate; via pyruvic acid) is an active-site residue. Ser-25 is modified (pyruvic acid (Ser)). Thr-57 contacts substrate. Residue Tyr-58 is the Proton donor of the active site. 73–75 (GGA) contributes to the substrate binding site.

It belongs to the PanD family. Heterooctamer of four alpha and four beta subunits. Pyruvate is required as a cofactor. Post-translationally, is synthesized initially as an inactive proenzyme, which is activated by self-cleavage at a specific serine bond to produce a beta-subunit with a hydroxyl group at its C-terminus and an alpha-subunit with a pyruvoyl group at its N-terminus.

The protein localises to the cytoplasm. The enzyme catalyses L-aspartate + H(+) = beta-alanine + CO2. It functions in the pathway cofactor biosynthesis; (R)-pantothenate biosynthesis; beta-alanine from L-aspartate: step 1/1. Catalyzes the pyruvoyl-dependent decarboxylation of aspartate to produce beta-alanine. The protein is Aspartate 1-decarboxylase of Acinetobacter baumannii (strain ACICU).